Here is a 132-residue protein sequence, read N- to C-terminus: MDVTRLLLATLLVFLCFFTVYSHLPPEEKLRDDRSLRSNSSVNLLDFPSVSIVALNKKSKQISRKEAEKKRSSKKEASMKKVAQPRTPLSAPCVATRYSCKPPAPACCDPCASCQCRFFRSACSCRVLRLNC.

An N-terminal signal peptide occupies residues 1–22 (MDVTRLLLATLLVFLCFFTVYS). Asparagine 39 carries N-linked (GlcNAc...) asparagine glycosylation. The segment at 62–88 (ISRKEAEKKRSSKKEASMKKVAQPRTP) is disordered. The segment covering 63 to 79 (SRKEAEKKRSSKKEASM) has biased composition (basic and acidic residues). Disulfide bonds link cysteine 93/cysteine 108, cysteine 100/cysteine 114, cysteine 107/cysteine 125, cysteine 111/cysteine 132, and cysteine 116/cysteine 123. The Agouti domain occupies 93 to 132 (CVATRYSCKPPAPACCDPCASCQCRFFRSACSCRVLRLNC).

The protein resides in the secreted. Involved in the regulation of melanogenesis. The binding of ASP to MC1R precludes alpha-MSH initiated signaling and thus blocks production of cAMP, leading to a down-regulation of eumelanogenesis (brown/black pigment) and thus increasing synthesis of pheomelanin (yellow/red pigment). This is Agouti-signaling protein (ASIP) from Semnopithecus entellus (Northern plains gray langur).